We begin with the raw amino-acid sequence, 63 residues long: Large ribosomal subunit protein bL28 (63 aa).

The disordered stretch occupies residues 1-21 (MSRRDDLTGKGPMFGNNRSHA).

It belongs to the bacterial ribosomal protein bL28 family.

This Mycoplasmopsis pulmonis (strain UAB CTIP) (Mycoplasma pulmonis) protein is Large ribosomal subunit protein bL28.